We begin with the raw amino-acid sequence, 1383 residues long: Periaxin (1383 aa).

Residue Ser7 is modified to Phosphoserine. Residues 16–99 enclose the PDZ domain; sequence LVEIIVETEA…YKVSFCLKRT (84 aa). The Nuclear export signal motif lies at 70 to 84; it reads VFFENFKYEDALRLL. Phosphoserine is present on residues Ser133 and Ser243. 46 tandem repeats follow at residues 432 to 436, 440 to 444, 448 to 452, 456 to 460, 461 to 465, 466 to 470, 474 to 478, 482 to 486, 487 to 491, 492 to 496, 497 to 501, 502 to 506, 507 to 511, 515 to 519, 523 to 527, 531 to 535, 536 to 540, 544 to 548, 549 to 553, 554 to 558, 562 to 566, 567 to 571, 575 to 579, 580 to 584, 585 to 589, 593 to 597, 601 to 605, 606 to 610, 611 to 615, 619 to 623, 627 to 631, 632 to 636, 637 to 641, 645 to 649, 653 to 657, 658 to 662, 663 to 667, 671 to 675, 676 to 680, 684 to 688, 689 to 693, 694 to 698, 699 to 703, 705 to 709, 713 to 717, and 718 to 722. Residues 432–722 form a 46 X 5 AA approximate tandem repeats of [LVMGIE]-[PSM]-[EDKA]-[LIVMA]-[AQKHPRT]; that may have a tripeptide spacer of [ALKD]-[IPV]-[KPH] region; it reads GPEVKAPKGP…VPEMKLPKVP (291 aa). Residues Ser838, Ser971, Ser1020, Ser1271, Ser1275, Ser1277, Ser1285, Ser1323, and Ser1329 each carry the phosphoserine modification. Residues 1251–1383 form a disordered region; the sequence is KVKSPKLRLP…RIEGTQAAAI (133 aa). A compositionally biased stretch (low complexity) spans 1267–1277; the sequence is SESASGEGSPS. Basic and acidic residues predominate over residues 1346–1355; the sequence is GSKDREEGGF. A Phosphoserine modification is found at Ser1361.

The protein belongs to the periaxin family. In terms of assembly, homodimer (via PDZ domain). Interacts with SCN10A. Found in a complex with SCN10A. Interacts with DRP2. Identified in a dystroglycan complex that contains at least PRX, DRP2, UTRN, DMD and DAG1. Detected in a complex composed of at least EZR, AHNAK, PPL and PRX. Identified in a complex with EZR, AHNAK, BFSP1, BFSP2, ANK2, PLEC, VIM and spectrin. Post-translationally, the N-terminus is blocked. Detected in sciatic nerve and in trigeminal nerve Schwann cells. Detected in myelinating Schwann cells in sciatic nerve (at protein level).

Its subcellular location is the nucleus. The protein localises to the cytoplasm. The protein resides in the cell membrane. It localises to the cell junction. Scaffolding protein that functions as part of a dystroglycan complex in Schwann cells, and as part of EZR and AHNAK-containing complexes in eye lens fiber cells. Required for the maintenance of the peripheral myelin sheath that is essential for normal transmission of nerve impulses and normal perception of sensory stimuli. Required for normal transport of MBP mRNA from the perinuclear to the paranodal regions. Required for normal remyelination after nerve injury. Required for normal elongation of Schwann cells and normal length of the internodes between the nodes of Ranvier. The demyelinated nodes of Ranvier permit saltatory transmission of nerve impulses; shorter internodes cause slower transmission of nerve impulses. Required for the formation of appositions between the abaxonal surface of the myelin sheath and the Schwann cell plasma membrane; the Schwann cell cytoplasm is restricted to regions between these appositions. Required for the formation of Cajal bands and of Schmidt-Lanterman incisures that correspond to short, cytoplasm-filled regions on myelinated nerves. Recruits DRP2 to the Schwann cell plasma membrane. Required for normal protein composition of the eye lens fiber cell plasma membrane and normal eye lens fiber cell morphology. In Rattus norvegicus (Rat), this protein is Periaxin (Prx).